Reading from the N-terminus, the 130-residue chain is Cyclin-dependent kinase 4 inhibitor B (130 aa).

ANK repeat units lie at residues 5-34, 38-66, 71-100, and 104-130; these read GSDA…DPNA, FGRR…EPNC, TLTR…RLDV, and WGRL…ATGD. Thr12 is subject to Phosphothreonine.

Belongs to the CDKN2 cyclin-dependent kinase inhibitor family. In terms of assembly, heterodimer of CDKN2B with CDK4 or CDK6. In terms of tissue distribution, expression abundant in lung, less abundant in testis, barely detectable in liver, and not detectable in neonatal kidney, adult kidney, brain, heart, or spleen.

Its function is as follows. Interacts strongly with CDK4 and CDK6. Potent inhibitor. Potential effector of TGF-beta induced cell cycle arrest. This Rattus norvegicus (Rat) protein is Cyclin-dependent kinase 4 inhibitor B (Cdkn2b).